A 135-amino-acid polypeptide reads, in one-letter code: Endoribonuclease YbeY (135 aa).

The Zn(2+) site is built by H102, H106, and H112.

This sequence belongs to the endoribonuclease YbeY family. Zn(2+) serves as cofactor.

The protein localises to the cytoplasm. Single strand-specific metallo-endoribonuclease involved in late-stage 70S ribosome quality control and in maturation of the 3' terminus of the 16S rRNA. In Rubrobacter xylanophilus (strain DSM 9941 / JCM 11954 / NBRC 16129 / PRD-1), this protein is Endoribonuclease YbeY.